A 123-amino-acid polypeptide reads, in one-letter code: Large ribosomal subunit protein bL20 (123 aa).

This sequence belongs to the bacterial ribosomal protein bL20 family.

In terms of biological role, binds directly to 23S ribosomal RNA and is necessary for the in vitro assembly process of the 50S ribosomal subunit. It is not involved in the protein synthesizing functions of that subunit. The chain is Large ribosomal subunit protein bL20 (rplT) from Chlamydia muridarum (strain MoPn / Nigg).